Consider the following 140-residue polypeptide: Glycine cleavage system H protein (140 aa).

Residues 22-104 (EVVIGITRFA…YGKGWMLRLK (83 aa)) form the Lipoyl-binding domain. Lysine 63 is modified (N6-lipoyllysine).

The protein belongs to the GcvH family. The glycine cleavage system is composed of four proteins: P, T, L and H. It depends on (R)-lipoate as a cofactor.

In terms of biological role, the glycine cleavage system catalyzes the degradation of glycine. The H protein shuttles the methylamine group of glycine from the P protein to the T protein. The polypeptide is Glycine cleavage system H protein (Magnetococcus marinus (strain ATCC BAA-1437 / JCM 17883 / MC-1)).